A 261-amino-acid chain; its full sequence is Bidirectional sugar transporter SWEET1b (261 aa).

Topologically, residues Met-1–Lys-6 are extracellular. Residues Phe-7 to Thr-27 traverse the membrane as a helical segment. A MtN3/slv 1 domain is found at Phe-7–His-95. Residues Phe-28–Gly-42 are Cytoplasmic-facing. The helical transmembrane segment at Val-43–Val-63 threads the bilayer. The Extracellular segment spans residues Ser-64 to Ser-71. A helical transmembrane segment spans residues Thr-72 to Ala-92. At Ser-93–Thr-101 the chain is on the cytoplasmic side. A helical transmembrane segment spans residues Leu-102 to Ala-122. At Leu-123–Lys-129 the chain is on the extracellular side. Residues Leu-130–Ile-150 traverse the membrane as a helical segment. Residues Gly-133–Lys-215 form the MtN3/slv 2 domain. Residues Met-151 to Pro-164 lie on the Cytoplasmic side of the membrane. A helical transmembrane segment spans residues Phe-165–Gly-185. Residues Arg-186–Phe-189 lie on the Extracellular side of the membrane. A helical membrane pass occupies residues Val-190–Ile-210. Residues Tyr-211–Val-261 lie on the Cytoplasmic side of the membrane. The interval Gly-218–Val-261 is disordered.

The protein belongs to the SWEET sugar transporter family. As to quaternary structure, forms homodimers.

The protein resides in the cell membrane. The catalysed reaction is D-glucose(out) = D-glucose(in). The enzyme catalyses D-galactose(in) = D-galactose(out). Its function is as follows. Mediates transport of sugars across the plasma membrane. Can transport glucose and galactose, but not fructose, mannose and sucrose. The polypeptide is Bidirectional sugar transporter SWEET1b (SWEET1B) (Oryza sativa subsp. indica (Rice)).